The primary structure comprises 237 residues: Protein FEV (237 aa).

Positions 47–127 (IQLWQFLLEL…HGKRYAYRFD (81 aa)) form a DNA-binding region, ETS. A may mediate active transcriptional repression region spans residues 129–237 (QGLAQACQPP…AASHLGGHYH (109 aa)).

This sequence belongs to the ETS family. Expressed in central serotonergic neurons.

The protein localises to the nucleus. Functionally, functions as a transcriptional regulator. May function as a transcriptional repressor. Functions in the differentiation and the maintenance of the central serotonergic neurons. May play a role in cell growth. This is Protein FEV (Fev) from Mus musculus (Mouse).